Reading from the N-terminus, the 444-residue chain is Gamma-glutamyl phosphate reductase (444 aa).

This sequence belongs to the gamma-glutamyl phosphate reductase family.

It is found in the cytoplasm. It carries out the reaction L-glutamate 5-semialdehyde + phosphate + NADP(+) = L-glutamyl 5-phosphate + NADPH + H(+). The protein operates within amino-acid biosynthesis; L-proline biosynthesis; L-glutamate 5-semialdehyde from L-glutamate: step 2/2. In terms of biological role, catalyzes the NADPH-dependent reduction of L-glutamate 5-phosphate into L-glutamate 5-semialdehyde and phosphate. The product spontaneously undergoes cyclization to form 1-pyrroline-5-carboxylate. This is Gamma-glutamyl phosphate reductase from Albidiferax ferrireducens (strain ATCC BAA-621 / DSM 15236 / T118) (Rhodoferax ferrireducens).